The following is a 476-amino-acid chain: Bifunctional protein HldE (476 aa).

Residues 1–318 are ribokinase; that stretch reads MKPILPDYSQ…AEAIHGSQDT (318 aa). 195–198 provides a ligand contact to ATP; it reads NMAE. Residue D264 is part of the active site. The cytidylyltransferase stretch occupies residues 344–476; sequence MTNGCFDILH…IIKAIKGGRG (133 aa).

It in the N-terminal section; belongs to the carbohydrate kinase PfkB family. In the C-terminal section; belongs to the cytidylyltransferase family. Homodimer.

The catalysed reaction is D-glycero-beta-D-manno-heptose 7-phosphate + ATP = D-glycero-beta-D-manno-heptose 1,7-bisphosphate + ADP + H(+). The enzyme catalyses D-glycero-beta-D-manno-heptose 1-phosphate + ATP + H(+) = ADP-D-glycero-beta-D-manno-heptose + diphosphate. It participates in nucleotide-sugar biosynthesis; ADP-L-glycero-beta-D-manno-heptose biosynthesis; ADP-L-glycero-beta-D-manno-heptose from D-glycero-beta-D-manno-heptose 7-phosphate: step 1/4. Its pathway is nucleotide-sugar biosynthesis; ADP-L-glycero-beta-D-manno-heptose biosynthesis; ADP-L-glycero-beta-D-manno-heptose from D-glycero-beta-D-manno-heptose 7-phosphate: step 3/4. Its function is as follows. Catalyzes the phosphorylation of D-glycero-D-manno-heptose 7-phosphate at the C-1 position to selectively form D-glycero-beta-D-manno-heptose-1,7-bisphosphate. Functionally, catalyzes the ADP transfer from ATP to D-glycero-beta-D-manno-heptose 1-phosphate, yielding ADP-D-glycero-beta-D-manno-heptose. This Vibrio atlanticus (strain LGP32) (Vibrio splendidus (strain Mel32)) protein is Bifunctional protein HldE.